The primary structure comprises 232 residues: MEESLLSIIVALDAKSQYDALKIVEQLDPTLCRVKVGKELFTHEGPSVVKKLQEENFEVFLDLKFHDIPNTTAQAVCAAADLGVWMVNVHASGGRKMMETCVERLKAGNYQTQLIAVTVLTSMGREDLKDIGLDIEPVEQVKRLAKLTKESGLDGVVCSAQEAKILRELIGQDFSLVTPGIRPEGSNADDQKRIVTPKQAMLDGSTHLVIGRPITNAENPTEMLKSILASIA.

Residues Asp-13, Lys-35, 62 to 71, Thr-121, Arg-182, Gln-191, Gly-211, and Arg-212 contribute to the substrate site; that span reads DLKFHDIPNT. Lys-64 acts as the Proton donor in catalysis.

The protein belongs to the OMP decarboxylase family. Type 1 subfamily. Homodimer.

The enzyme catalyses orotidine 5'-phosphate + H(+) = UMP + CO2. Its pathway is pyrimidine metabolism; UMP biosynthesis via de novo pathway; UMP from orotate: step 2/2. Functionally, catalyzes the decarboxylation of orotidine 5'-monophosphate (OMP) to uridine 5'-monophosphate (UMP). The sequence is that of Orotidine 5'-phosphate decarboxylase from Acinetobacter baumannii (strain AB0057).